The chain runs to 269 residues: Energy-coupling factor transporter ATP-binding protein EcfA1 (269 aa).

Positions I8–D242 constitute an ABC transporter domain. G42 to S49 is an ATP binding site.

The protein belongs to the ABC transporter superfamily. Energy-coupling factor EcfA family. In terms of assembly, forms a stable energy-coupling factor (ECF) transporter complex composed of 2 membrane-embedded substrate-binding proteins (S component), 2 ATP-binding proteins (A component) and 2 transmembrane proteins (T component).

Its subcellular location is the cell membrane. Its function is as follows. ATP-binding (A) component of a common energy-coupling factor (ECF) ABC-transporter complex. Unlike classic ABC transporters this ECF transporter provides the energy necessary to transport a number of different substrates. This Staphylococcus aureus (strain USA300) protein is Energy-coupling factor transporter ATP-binding protein EcfA1.